We begin with the raw amino-acid sequence, 460 residues long: Cysteine--tRNA ligase (460 aa).

Cys29 serves as a coordination point for Zn(2+). The 'HIGH' region motif lies at 31-41 (MTIYDLCHIGH). Zn(2+) contacts are provided by Cys213, His238, and Glu242. Residues 270 to 274 (KMSKS) carry the 'KMSKS' region motif. Lys273 provides a ligand contact to ATP.

Belongs to the class-I aminoacyl-tRNA synthetase family. As to quaternary structure, monomer. Requires Zn(2+) as cofactor.

It localises to the cytoplasm. It catalyses the reaction tRNA(Cys) + L-cysteine + ATP = L-cysteinyl-tRNA(Cys) + AMP + diphosphate. The polypeptide is Cysteine--tRNA ligase (Verminephrobacter eiseniae (strain EF01-2)).